A 244-amino-acid polypeptide reads, in one-letter code: uncharacterized protein (244 aa).

The next 6 membrane-spanning stretches (helical) occupy residues 5–27 (KFAL…LLAV), 37–59 (IVMV…SRFL), 87–106 (LVFI…FYYG), 116–138 (LSLF…FFVA), 159–181 (FWIW…VQPS), and 196–218 (GVFN…RMVA).

Its subcellular location is the cell membrane. This is an uncharacterized protein from Archaeoglobus fulgidus (strain ATCC 49558 / DSM 4304 / JCM 9628 / NBRC 100126 / VC-16).